The chain runs to 383 residues: Protein FAM217B (383 aa).

Disordered regions lie at residues 1-70 (MNAG…CQGA), 89-115 (ADED…PPDL), 200-222 (KAKG…KSPG), 232-251 (SKPL…RKKA), 284-325 (QTLE…HIRV), and 338-383 (SCKA…YKLK). The segment covering 8–43 (NKVQHSKNSSGKRQSKSQVPHASSQPRSSLTAVTQP) has biased composition (polar residues). Over residues 44 to 56 (TEEKLKESISPEA) the composition is skewed to basic and acidic residues. Residues 374 to 383 (GVKQNTYKLK) are compositionally biased toward polar residues.

Belongs to the FAM217 family.

This chain is Protein FAM217B (FAM217B), found in Homo sapiens (Human).